A 340-amino-acid chain; its full sequence is Proline-rich transmembrane protein 2 (340 aa).

Residues 1–261 (MAASSSEISE…AGPGVEGGEG (261 aa)) are disordered. The Cytoplasmic portion of the chain corresponds to 1–268 (MAASSSEISE…GEGTQKPRDY (268 aa)). The span at 9 to 18 (SEMKGVEESP) shows a compositional bias: basic and acidic residues. A Phosphoserine modification is found at Ser28. Residue Thr74 is modified to Phosphothreonine. 2 stretches are compositionally biased toward pro residues: residues 131-155 (PPEPAPEPAPQPDPRPDSQPTPKPA) and 197-207 (APEPHSPPSKK). Phosphoserine is present on Ser238. Arg240 is modified (omega-N-methylarginine). 2 positions are modified to phosphoserine: Ser248 and Ser249. The helical intramembrane region spans 269–289 (IILAILSCFCPMWPVNIVAFA). At 290-317 (YAVMSRNSLQQGDVDGAQRLGRVAKLLS) the chain is on the cytoplasmic side. The chain crosses the membrane as a helical span at residues 318 to 338 (IVALVGGVLIIIASCVINLGV). The Extracellular portion of the chain corresponds to 339-340 (YK).

This sequence belongs to the CD225/Dispanin family. In terms of assembly, component of the outer core of AMPAR complex. AMPAR complex consists of an inner core made of 4 pore-forming GluA/GRIA proteins (GRIA1, GRIA2, GRIA3 and GRIA4) and 4 major auxiliary subunits arranged in a twofold symmetry. One of the two pairs of distinct binding sites is occupied either by CNIH2, CNIH3 or CACNG2, CACNG3. The other harbors CACNG2, CACNG3, CACNG4, CACNG8 or GSG1L. This inner core of AMPAR complex is complemented by outer core constituents binding directly to the GluA/GRIA proteins at sites distinct from the interaction sites of the inner core constituents. Outer core constituents include at least PRRT1, PRRT2, CKAMP44/SHISA9, FRRS1L and NRN1. The proteins of the inner and outer core serve as a platform for other, more peripherally associated AMPAR constituents. Alone or in combination, these auxiliary subunits control the gating and pharmacology of the AMPAR complex and profoundly impact their biogenesis and protein processing. Interacts with intersectin 1/ITSN1. Interacts with SNARE complex components, including SNAP25, STX1A, SYT1 and SYT2; this interaction may inhibit SNARE complex formation.

Its subcellular location is the cell membrane. It is found in the presynaptic cell membrane. It localises to the synapse. The protein resides in the cell projection. The protein localises to the axon. Its subcellular location is the cytoplasmic vesicle. It is found in the secretory vesicle. It localises to the synaptic vesicle membrane. The protein resides in the postsynaptic density membrane. The protein localises to the dendritic spine. In terms of biological role, as a component of the outer core of AMPAR complex, may be involved in synaptic transmission in the central nervous system. In hippocampal neurons, in presynaptic terminals, plays an important role in the final steps of neurotransmitter release, possibly by regulating Ca(2+)-sensing. In the cerebellum, may inhibit SNARE complex formation and down-regulate short-term facilitation. The sequence is that of Proline-rich transmembrane protein 2 (PRRT2) from Homo sapiens (Human).